We begin with the raw amino-acid sequence, 578 residues long: Arginine--tRNA ligase (578 aa).

The 'HIGH' region motif lies at 127–137 (PNLAKEMHVGH).

Belongs to the class-I aminoacyl-tRNA synthetase family. As to quaternary structure, monomer.

It localises to the cytoplasm. It carries out the reaction tRNA(Arg) + L-arginine + ATP = L-arginyl-tRNA(Arg) + AMP + diphosphate. This Pseudomonas putida (strain GB-1) protein is Arginine--tRNA ligase.